Consider the following 536-residue polypeptide: Phosphoenolpyruvate carboxykinase (ATP) (536 aa).

3 residues coordinate substrate: Arg-61, Tyr-195, and Lys-201. Residues Lys-201, His-220, and 236-244 (GLSGTGKTT) each bind ATP. Mn(2+) contacts are provided by Lys-201 and His-220. Residue Asp-257 participates in Mn(2+) binding. Positions 285, 322, and 447 each coordinate ATP. Residue Arg-322 participates in substrate binding.

This sequence belongs to the phosphoenolpyruvate carboxykinase (ATP) family. Mn(2+) serves as cofactor.

It is found in the cytoplasm. The enzyme catalyses oxaloacetate + ATP = phosphoenolpyruvate + ADP + CO2. The protein operates within carbohydrate biosynthesis; gluconeogenesis. Functionally, involved in the gluconeogenesis. Catalyzes the conversion of oxaloacetate (OAA) to phosphoenolpyruvate (PEP) through direct phosphoryl transfer between the nucleoside triphosphate and OAA. This is Phosphoenolpyruvate carboxykinase (ATP) from Rhizobium etli (strain CIAT 652).